A 512-amino-acid chain; its full sequence is NAD(P)H-quinone oxidoreductase subunit 2, organellar chromatophore (512 aa).

14 helical membrane passes run 6–26, 43–63, 80–100, 107–127, 133–153, 168–188, 210–230, 242–262, 276–296, 304–324, 332–352, 376–396, 411–431, and 464–484; these read LLAL…LLAL, WVPP…ASQW, LAIA…MISW, GAPM…AMFL, LVSI…LAGY, LLVG…LYGL, AALA…AVPF, PTPI…ALAL, WKFL…IVAL, MLAY…VCGT, ILYL…VILF, IGLS…GFFG, LLVV…ISVI, and VALL…NPLF.

It belongs to the complex I subunit 2 family. As to quaternary structure, NDH-1 can be composed of about 15 different subunits; different subcomplexes with different compositions have been identified which probably have different functions.

It localises to the plastid. It is found in the organellar chromatophore thylakoid membrane. The catalysed reaction is a plastoquinone + NADH + (n+1) H(+)(in) = a plastoquinol + NAD(+) + n H(+)(out). It carries out the reaction a plastoquinone + NADPH + (n+1) H(+)(in) = a plastoquinol + NADP(+) + n H(+)(out). NDH-1 shuttles electrons from an unknown electron donor, via FMN and iron-sulfur (Fe-S) centers, to quinones in the respiratory and/or the photosynthetic chain. The immediate electron acceptor for the enzyme in this species is believed to be plastoquinone. Couples the redox reaction to proton translocation, and thus conserves the redox energy in a proton gradient. Cyanobacterial NDH-1 also plays a role in inorganic carbon-concentration. This chain is NAD(P)H-quinone oxidoreductase subunit 2, organellar chromatophore, found in Paulinella chromatophora.